A 143-amino-acid chain; its full sequence is 3-hydroxyacyl-[acyl-carrier-protein] dehydratase FabZ (143 aa).

Residue H49 is part of the active site.

The protein belongs to the thioester dehydratase family. FabZ subfamily.

Its subcellular location is the cytoplasm. The enzyme catalyses a (3R)-hydroxyacyl-[ACP] = a (2E)-enoyl-[ACP] + H2O. Involved in unsaturated fatty acids biosynthesis. Catalyzes the dehydration of short chain beta-hydroxyacyl-ACPs and long chain saturated and unsaturated beta-hydroxyacyl-ACPs. The protein is 3-hydroxyacyl-[acyl-carrier-protein] dehydratase FabZ of Wolbachia pipientis wMel.